Reading from the N-terminus, the 271-residue chain is Tryptophan synthase alpha chain (271 aa).

Residues E53 and D64 each act as proton acceptor in the active site.

Belongs to the TrpA family. As to quaternary structure, tetramer of two alpha and two beta chains.

It catalyses the reaction (1S,2R)-1-C-(indol-3-yl)glycerol 3-phosphate + L-serine = D-glyceraldehyde 3-phosphate + L-tryptophan + H2O. Its pathway is amino-acid biosynthesis; L-tryptophan biosynthesis; L-tryptophan from chorismate: step 5/5. The alpha subunit is responsible for the aldol cleavage of indoleglycerol phosphate to indole and glyceraldehyde 3-phosphate. This is Tryptophan synthase alpha chain from Streptomyces coelicolor (strain ATCC BAA-471 / A3(2) / M145).